The following is a 350-amino-acid chain: Small ribosomal subunit biogenesis GTPase RsgA (350 aa).

The span at 1–17 shows a compositional bias: polar residues; it reads MSKNKLSKGQQRRVNAN. The tract at residues 1 to 27 is disordered; the sequence is MSKNKLSKGQQRRVNANHQRRLKTSAE. One can recognise a CP-type G domain in the interval 104–273; it reads TSVLTRPDFY…VIDSPGVREF (170 aa). GTP is bound by residues 160–163 and 214–222; these read NKID and GQSGVGKSS. Cys-297, Cys-302, His-304, and Cys-310 together coordinate Zn(2+).

The protein belongs to the TRAFAC class YlqF/YawG GTPase family. RsgA subfamily. Monomer. Associates with 30S ribosomal subunit, binds 16S rRNA. It depends on Zn(2+) as a cofactor.

The protein localises to the cytoplasm. In terms of biological role, one of several proteins that assist in the late maturation steps of the functional core of the 30S ribosomal subunit. Helps release RbfA from mature subunits. May play a role in the assembly of ribosomal proteins into the subunit. Circularly permuted GTPase that catalyzes slow GTP hydrolysis, GTPase activity is stimulated by the 30S ribosomal subunit. The protein is Small ribosomal subunit biogenesis GTPase RsgA of Salmonella typhi.